A 156-amino-acid polypeptide reads, in one-letter code: ATP synthase subunit b (156 aa).

The helical transmembrane segment at phenylalanine 7–proline 27 threads the bilayer.

The protein belongs to the ATPase B chain family. As to quaternary structure, F-type ATPases have 2 components, F(1) - the catalytic core - and F(0) - the membrane proton channel. F(1) has five subunits: alpha(3), beta(3), gamma(1), delta(1), epsilon(1). F(0) has three main subunits: a(1), b(2) and c(10-14). The alpha and beta chains form an alternating ring which encloses part of the gamma chain. F(1) is attached to F(0) by a central stalk formed by the gamma and epsilon chains, while a peripheral stalk is formed by the delta and b chains.

It is found in the cell inner membrane. Functionally, f(1)F(0) ATP synthase produces ATP from ADP in the presence of a proton or sodium gradient. F-type ATPases consist of two structural domains, F(1) containing the extramembraneous catalytic core and F(0) containing the membrane proton channel, linked together by a central stalk and a peripheral stalk. During catalysis, ATP synthesis in the catalytic domain of F(1) is coupled via a rotary mechanism of the central stalk subunits to proton translocation. Component of the F(0) channel, it forms part of the peripheral stalk, linking F(1) to F(0). This chain is ATP synthase subunit b, found in Cupriavidus metallidurans (strain ATCC 43123 / DSM 2839 / NBRC 102507 / CH34) (Ralstonia metallidurans).